A 202-amino-acid chain; its full sequence is NADH-quinone oxidoreductase subunit B (202 aa).

Over residues Met1–Ser13 the composition is skewed to polar residues. The disordered stretch occupies residues Met1 to Thr32. [4Fe-4S] cluster is bound by residues Cys81, Cys82, Cys146, and Cys176.

The protein belongs to the complex I 20 kDa subunit family. In terms of assembly, NDH-1 is composed of 14 different subunits. Subunits NuoB, C, D, E, F, and G constitute the peripheral sector of the complex. It depends on [4Fe-4S] cluster as a cofactor.

Its subcellular location is the cell inner membrane. It catalyses the reaction a quinone + NADH + 5 H(+)(in) = a quinol + NAD(+) + 4 H(+)(out). In terms of biological role, NDH-1 shuttles electrons from NADH, via FMN and iron-sulfur (Fe-S) centers, to quinones in the respiratory chain. The immediate electron acceptor for the enzyme in this species is believed to be ubiquinone. Couples the redox reaction to proton translocation (for every two electrons transferred, four hydrogen ions are translocated across the cytoplasmic membrane), and thus conserves the redox energy in a proton gradient. The polypeptide is NADH-quinone oxidoreductase subunit B (Nitrobacter hamburgensis (strain DSM 10229 / NCIMB 13809 / X14)).